Consider the following 485-residue polypeptide: Probable trichothecene esterase SAT6 (485 aa).

Positions 1-23 (MPQDPNTTLQMSSSKPSLSDLSV) are disordered. The segment covering 9–23 (LQMSSSKPSLSDLSV) has biased composition (low complexity). Catalysis depends on charge relay system residues S262, D406, and H438.

The protein belongs to the AB hydrolase superfamily. Lipase family.

It functions in the pathway mycotoxin biosynthesis. Its function is as follows. Probable trichothecene esterase; part of the satratoxin SC1 cluster involved in the biosynthesis of satratoxins, trichothecene mycotoxins that are associated with human food poisonings. Satratoxins are suggested to be made by products of multiple gene clusters (SC1, SC2 and SC3) that encode 21 proteins in all, including polyketide synthases, acetyltransferases, and other enzymes expected to modify the trichothecene skeleton. SC1 encodes 10 proteins, SAT1 to SAT10. The largest are SAT8, which encodes a putative polyketide synthase (PKS) with a conventional non-reducing architecture, and SAT10, a putative protein containing four ankyrin repeats and thus may be involved in protein scaffolding. The putative short-chain reductase SAT3 may assist the PKS in some capacity. SAT6 contains a secretory lipase domain and acts probably as a trichothecene esterase. SAT5 encodes a putative acetyltransferase, and so, with SAT6, may affect endogenous protection from toxicity. The probable transcription factor SAT9 may regulate the expression of the SC1 cluster. SC2 encodes proteins SAT11 to SAT16, the largest of which encodes the putative reducing PKS SAT13. SAT11 is a cytochrome P450 monooxygenase, while SAT14 and SAT16 are probable acetyltransferases. The SC2 cluster may be regulated by the transcription factor SAT15. SC3 is a small cluster that encodes 5 proteins, SAT17 to SAT21. SAT21 is a putative MFS-type transporter which may have a role in exporting secondary metabolites. The four other proteins putatively encoded in SC3 include the taurine hydroxylase-like protein SAT17, the O-methyltransferase SAT18, the acetyltransferase SAT19, and the Cys6-type zinc finger SAT20, the latter being probably involved in regulation of SC3 expression. The chain is Probable trichothecene esterase SAT6 from Stachybotrys chartarum (strain CBS 109288 / IBT 7711) (Toxic black mold).